The sequence spans 355 residues: MSNPQSIVVLGGGSWGTAVAHLLATGGHKVHLVLRSQKLADYINMHHENNIYLPGFSIHPAIHAVTGKISFLTKEPAHVLAKATIVILSVPCQSLRPVLQELEPLLTKNCILVNTAKGIEVETLKTVEQMILDEMAHRVSHYAVLSGPSFAEEVMCEKPTAVVLACRNEQLGEHLREIFSTPWFRTYSSTDVTGVELGGATKNVIAIAAGVSDGLGFGINTRVALMTRGLAETTRLGKALGASPLTFSGLSGLGDLFLTCSGELSRNRQVGLRLGKGELLKNITNSMNMIAEGIKTTYAVNTLASKLNVDMPITKAVYNVLEGVISPHEAVQKLLCRQLRNESLDETQPIWTDIP.

NADPH contacts are provided by Ser-14, Trp-15, Arg-35, and Lys-117. Sn-glycerol 3-phosphate is bound by residues Lys-117, Gly-147, and Ser-149. Ala-151 provides a ligand contact to NADPH. Sn-glycerol 3-phosphate contacts are provided by Lys-202, Asp-255, Ser-265, Arg-266, and Asn-267. Lys-202 functions as the Proton acceptor in the catalytic mechanism. An NADPH-binding site is contributed by Arg-266. NADPH contacts are provided by Ile-290 and Glu-292.

Belongs to the NAD-dependent glycerol-3-phosphate dehydrogenase family.

It localises to the cytoplasm. The enzyme catalyses sn-glycerol 3-phosphate + NAD(+) = dihydroxyacetone phosphate + NADH + H(+). The catalysed reaction is sn-glycerol 3-phosphate + NADP(+) = dihydroxyacetone phosphate + NADPH + H(+). It participates in membrane lipid metabolism; glycerophospholipid metabolism. Its function is as follows. Catalyzes the reduction of the glycolytic intermediate dihydroxyacetone phosphate (DHAP) to sn-glycerol 3-phosphate (G3P), the key precursor for phospholipid synthesis. This is Glycerol-3-phosphate dehydrogenase [NAD(P)+] from Lawsonia intracellularis (strain PHE/MN1-00).